A 227-amino-acid polypeptide reads, in one-letter code: Cytochrome c oxidase subunit 2 (227 aa).

Residues 1-14 are Mitochondrial intermembrane-facing; it reads MAYPFQLGLQDATS. Residues 15 to 45 form a helical membrane-spanning segment; it reads PIMEELMNFHDHTLMIVFLISTLVLYIISLM. The Mitochondrial matrix segment spans residues 46–59; that stretch reads LTTKLTHTSTMDAQ. A helical transmembrane segment spans residues 60–87; sequence EVETVWTILPAVILIMIALPSLRILYMM. At 88–227 the chain is on the mitochondrial intermembrane side; the sequence is DEINNPVLTV…HFENWSTSMI (140 aa). Positions 161, 196, 198, 200, 204, and 207 each coordinate Cu cation. Residue Glu198 participates in Mg(2+) binding.

The protein belongs to the cytochrome c oxidase subunit 2 family. In terms of assembly, component of the cytochrome c oxidase (complex IV, CIV), a multisubunit enzyme composed of 14 subunits. The complex is composed of a catalytic core of 3 subunits MT-CO1, MT-CO2 and MT-CO3, encoded in the mitochondrial DNA, and 11 supernumerary subunits COX4I, COX5A, COX5B, COX6A, COX6B, COX6C, COX7A, COX7B, COX7C, COX8 and NDUFA4, which are encoded in the nuclear genome. The complex exists as a monomer or a dimer and forms supercomplexes (SCs) in the inner mitochondrial membrane with NADH-ubiquinone oxidoreductase (complex I, CI) and ubiquinol-cytochrome c oxidoreductase (cytochrome b-c1 complex, complex III, CIII), resulting in different assemblies (supercomplex SCI(1)III(2)IV(1) and megacomplex MCI(2)III(2)IV(2)). Found in a complex with TMEM177, COA6, COX18, COX20, SCO1 and SCO2. Interacts with TMEM177 in a COX20-dependent manner. Interacts with COX20. Interacts with COX16. It depends on Cu cation as a cofactor.

It is found in the mitochondrion inner membrane. It carries out the reaction 4 Fe(II)-[cytochrome c] + O2 + 8 H(+)(in) = 4 Fe(III)-[cytochrome c] + 2 H2O + 4 H(+)(out). Its function is as follows. Component of the cytochrome c oxidase, the last enzyme in the mitochondrial electron transport chain which drives oxidative phosphorylation. The respiratory chain contains 3 multisubunit complexes succinate dehydrogenase (complex II, CII), ubiquinol-cytochrome c oxidoreductase (cytochrome b-c1 complex, complex III, CIII) and cytochrome c oxidase (complex IV, CIV), that cooperate to transfer electrons derived from NADH and succinate to molecular oxygen, creating an electrochemical gradient over the inner membrane that drives transmembrane transport and the ATP synthase. Cytochrome c oxidase is the component of the respiratory chain that catalyzes the reduction of oxygen to water. Electrons originating from reduced cytochrome c in the intermembrane space (IMS) are transferred via the dinuclear copper A center (CU(A)) of subunit 2 and heme A of subunit 1 to the active site in subunit 1, a binuclear center (BNC) formed by heme A3 and copper B (CU(B)). The BNC reduces molecular oxygen to 2 water molecules using 4 electrons from cytochrome c in the IMS and 4 protons from the mitochondrial matrix. The chain is Cytochrome c oxidase subunit 2 (MT-CO2) from Apodemus semotus (Taiwan field mouse).